Here is a 353-residue protein sequence, read N- to C-terminus: Guanidino acid hydrolase, mitochondrial (353 aa).

The N-terminal 33 residues, 1 to 33, are a transit peptide targeting the mitochondrion; the sequence is MLQLLKSSWVRSAGSGVVTWRASAGLFCPGTRQ. Residues 29 to 52 form a disordered region; the sequence is PGTRQASDTSDTLHHPSPSSESQV. Residues His-163 and His-188 each contribute to the Mn(2+) site. An N6-acetyllysine modification is found at Lys-194. Residue Lys-218 is modified to N6-acetyllysine; alternate. Lys-218 carries the post-translational modification N6-succinyllysine; alternate. Asp-279 contributes to the Mn(2+) binding site.

This sequence belongs to the arginase family. Agmatinase subfamily. The cofactor is Mn(2+).

It is found in the mitochondrion. The catalysed reaction is 3-guanidinopropanoate + H2O = urea + beta-alanine. The enzyme catalyses 4-guanidinobutanoate + H2O = urea + 4-aminobutanoate. It carries out the reaction taurocyamine + H2O = urea + taurine. It catalyses the reaction L-arginine + H2O = urea + L-ornithine. It functions in the pathway nitrogen metabolism; urea cycle; L-ornithine and urea from L-arginine: step 1/1. Hydrolyzes linear guanidino acids to form urea and the corresponding amines. Displays specificity for substrates having a negatively charged head group and short chains including taurocyamine, guanidino propanoic and butanoic acids. May protect cells by detoxifying potentially harmful amounts of guanidino acids. Metabolizes L-arginine with low efficiency. This chain is Guanidino acid hydrolase, mitochondrial (Agmat), found in Rattus norvegicus (Rat).